We begin with the raw amino-acid sequence, 209 residues long: UPF0502 protein mll4256 (209 aa).

It belongs to the UPF0502 family.

The sequence is that of UPF0502 protein mll4256 from Mesorhizobium japonicum (strain LMG 29417 / CECT 9101 / MAFF 303099) (Mesorhizobium loti (strain MAFF 303099)).